A 207-amino-acid polypeptide reads, in one-letter code: Fibroblast growth factor 18 (207 aa).

The first 27 residues, Met-1–Ala-27, serve as a signal peptide directing secretion. Asn-39 is a glycosylation site (N-linked (GlcNAc...) asparagine). A disulfide bridge connects residues Cys-109 and Cys-127. Asn-137 carries an N-linked (GlcNAc...) asparagine glycan.

This sequence belongs to the heparin-binding growth factors family. In terms of assembly, interacts with FGFR3 and FGFR4.

It is found in the secreted. Functionally, plays an important role in the regulation of cell proliferation, cell differentiation and cell migration. Required for normal ossification and bone development. Stimulates hepatic and intestinal proliferation. The sequence is that of Fibroblast growth factor 18 (Fgf18) from Mus musculus (Mouse).